The primary structure comprises 348 residues: Mannonate dehydratase (348 aa).

It belongs to the mannonate dehydratase family. The cofactor is Fe(2+). Mn(2+) is required as a cofactor.

It carries out the reaction D-mannonate = 2-dehydro-3-deoxy-D-gluconate + H2O. Its pathway is carbohydrate metabolism; pentose and glucuronate interconversion. Catalyzes the dehydration of D-mannonate. This is Mannonate dehydratase from Streptococcus uberis (strain ATCC BAA-854 / 0140J).